The chain runs to 229 residues: Prolactin (229 aa).

Residues 1-30 form the signal peptide; it reads MSNRGASLKGLFLAVLLVSNTLLTKEGVTS. 3 disulfides stabilise this stretch: cysteine 34-cysteine 41, cysteine 88-cysteine 204, and cysteine 221-cysteine 229.

The protein belongs to the somatotropin/prolactin family.

Its subcellular location is the secreted. The sequence is that of Prolactin (PRL) from Gallus gallus (Chicken).